The chain runs to 230 residues: Response regulator MprA (230 aa).

One can recognise a Response regulatory domain in the interval 4-118 (RILVVDDDRA…ELLARMRALL (115 aa)). A 4-aspartylphosphate modification is found at Asp-48. Positions 129 to 227 (SMAMRFSDLT…VRGVGYVLRE (99 aa)) form a DNA-binding region, ompR/PhoB-type.

As to quaternary structure, monomer. Interaction with each conserved 8-bp repeat requires tandem binding by two protein monomers. Post-translationally, phosphorylated and dephosphorylated by MprB.

It is found in the cytoplasm. Its function is as follows. Member of the two-component regulatory system MprB/MprA which contributes to maintaining a balance among several systems involved in stress resistance and is required for establishment and maintenance of persistent infection in the host. Functions as a transcriptional regulator that recognizes a 19-bp nucleotide motif comprizing two loosely conserved 8-bp direct DNA-binding motif repeats separated by a 3-bp spacer region. MprB/MprA up-regulates expression of mprA and pepD. The protein is Response regulator MprA (mprA) of Mycobacterium bovis (strain ATCC BAA-935 / AF2122/97).